A 954-amino-acid polypeptide reads, in one-letter code: Patched domain-containing protein 3 (954 aa).

Residues 1-20 are compositionally biased toward basic and acidic residues; the sequence is MPWVEPKPRPGPEQKPKLTK. The disordered stretch occupies residues 1 to 103; the sequence is MPWVEPKPRP…APLPEEETPE (103 aa). The segment covering 42-57 has biased composition (pro residues); sequence QPPPGPLAPPKSPEPS. The segment covering 90–102 has biased composition (acidic residues); that stretch reads ELDDAPLPEEETP. The chain crosses the membrane as a helical span at residues 139–159; the sequence is WIFLLAPLMLTAALGTGFLYL. 3 N-linked (GlcNAc...) asparagine glycosylation sites follow: Asn192, Asn275, and Asn279. 7 consecutive transmembrane segments (helical) span residues 297 to 317, 383 to 403, 423 to 443, 447 to 467, 486 to 506, 520 to 540, and 603 to 623; these read LTGF…QLLL, VIPV…TSCF, FLAV…FVII, SPFL…SAWH, AAVS…TGIM, GMTL…FMAL, and YFVV…CFHV. The SSD domain occupies 383 to 540; sequence VIPVFHLAYI…ITCFGAFMAL (158 aa). N-linked (GlcNAc...) asparagine glycosylation is found at Asn678, Asn692, and Asn737. A run of 5 helical transmembrane segments spans residues 804–824, 826–846, 858–878, 894–914, and 927–947; these read VLVA…YPLC, LWVT…MAFW, LVIC…AFVS, LLGY…CVLA, and IMFL…PVFL.

Belongs to the patched family. As to expression, expressed in germ cells of the testis (at protein level). Detected in blood lymph, colon, small intestine, ovary, testis, prostate, thymus and spleen with highest levels in testis.

It localises to the cell projection. Its subcellular location is the cilium. The protein localises to the flagellum membrane. The protein resides in the endoplasmic reticulum membrane. May play a role in sperm development or sperm function. However, does not appear to have an essential role in spermatogenesis or male fertility. In Homo sapiens (Human), this protein is Patched domain-containing protein 3 (PTCHD3).